The following is a 335-amino-acid chain: NAC domain-containing protein 87 (335 aa).

In terms of domain architecture, NAC spans Leu-21–Lys-172. The DNA-binding element occupies Val-119 to Thr-178.

It is found in the nucleus. Functionally, binds to the promoter regions of genes involved in chlorophyll catabolic processes, such as NYC1, SGR1, SGR2 and PAO. This Arabidopsis thaliana (Mouse-ear cress) protein is NAC domain-containing protein 87.